The primary structure comprises 708 residues: Exocyst complex component 5 (708 aa).

At A2 the chain carries N-acetylalanine. The stretch at 40 to 101 (KRLLEEFVNH…AFQHFQELDE (62 aa)) forms a coiled coil. Residues T122, T395, and T405 each carry the phosphothreonine modification. Position 412 is a phosphoserine (S412).

This sequence belongs to the SEC10 family. In terms of assembly, the exocyst complex is composed of EXOC1, EXOC2, EXOC3, EXOC4, EXOC5, EXOC6, EXOC7 and EXOC8. Interacts with EXOC3L1.

It is found in the cytoplasm. Its subcellular location is the midbody. Its function is as follows. Component of the exocyst complex involved in the docking of exocytic vesicles with fusion sites on the plasma membrane. This is Exocyst complex component 5 (Exoc5) from Mus musculus (Mouse).